We begin with the raw amino-acid sequence, 514 residues long: Bifunctional purine biosynthesis protein PurH (514 aa).

Positions 1–142 (MLALLSVSDK…KNFRHVSVVV (142 aa)) constitute an MGS-like domain.

This sequence belongs to the PurH family.

It carries out the reaction (6R)-10-formyltetrahydrofolate + 5-amino-1-(5-phospho-beta-D-ribosyl)imidazole-4-carboxamide = 5-formamido-1-(5-phospho-D-ribosyl)imidazole-4-carboxamide + (6S)-5,6,7,8-tetrahydrofolate. The catalysed reaction is IMP + H2O = 5-formamido-1-(5-phospho-D-ribosyl)imidazole-4-carboxamide. Its pathway is purine metabolism; IMP biosynthesis via de novo pathway; 5-formamido-1-(5-phospho-D-ribosyl)imidazole-4-carboxamide from 5-amino-1-(5-phospho-D-ribosyl)imidazole-4-carboxamide (10-formyl THF route): step 1/1. It functions in the pathway purine metabolism; IMP biosynthesis via de novo pathway; IMP from 5-formamido-1-(5-phospho-D-ribosyl)imidazole-4-carboxamide: step 1/1. This is Bifunctional purine biosynthesis protein PurH from Myxococcus xanthus (strain DK1622).